Reading from the N-terminus, the 325-residue chain is Brain mitochondrial carrier protein 1 (325 aa).

A run of 6 helical transmembrane segments spans residues 38–54 (GLNW…SIVA), 112–128 (LRQA…YQSL), 145–165 (MICG…TDVL), 199–215 (GVVP…GVEL), 240–256 (VSSF…SNPV), and 298–315 (GFWP…IFFI). Solcar repeat units follow at residues 42–131 (KPFV…LKRL), 139–224 (ETLL…TKKH), and 233–323 (DTIL…LKRL).

This sequence belongs to the mitochondrial carrier (TC 2.A.29) family. As to quaternary structure, homotetramer. As to expression, mainly expressed in brain, particularly abundant in cortex, hippocampus thalamus, amygdala and hypothalamus. Highly expressed in heart and kidney, but not liver or lung (at protein level). In the nervous system, expressed in cortex, basal ganglia, substantia nigra, cerebellum, and spinal cord (at protein level).

It localises to the mitochondrion inner membrane. The enzyme catalyses sulfite(in) + sulfate(out) = sulfite(out) + sulfate(in). It catalyses the reaction thiosulfate(in) + sulfate(out) = thiosulfate(out) + sulfate(in). The catalysed reaction is sulfate(out) + phosphate(in) = sulfate(in) + phosphate(out). It carries out the reaction oxalate(in) + sulfate(out) = oxalate(out) + sulfate(in). The enzyme catalyses malonate(in) + sulfate(out) = malonate(out) + sulfate(in). It catalyses the reaction maleate(in) + sulfate(out) = maleate(out) + sulfate(in). The catalysed reaction is (S)-malate(in) + sulfate(out) = (S)-malate(out) + sulfate(in). It carries out the reaction (3S)-citramalate(in) + sulfate(out) = (3S)-citramalate(out) + sulfate(in). The enzyme catalyses (3R)-citramalate(in) + sulfate(out) = (3R)-citramalate(out) + sulfate(in). It catalyses the reaction sulfate(out) + succinate(in) = sulfate(in) + succinate(out). The catalysed reaction is (S,S)-tartrate(in) + sulfate(out) = (S,S)-tartrate(out) + sulfate(in). It carries out the reaction (2R,3R)-tartrate(in) + sulfate(out) = (2R,3R)-tartrate(out) + sulfate(in). The enzyme catalyses D-aspartate(in) + sulfate(out) = D-aspartate(out) + sulfate(in). It catalyses the reaction L-aspartate(in) + sulfate(out) = L-aspartate(out) + sulfate(in). The catalysed reaction is sulfate(in) = sulfate(out). It carries out the reaction phosphate(in) = phosphate(out). The enzyme catalyses (S)-malate(out) = (S)-malate(in). It catalyses the reaction citrate(in) = citrate(out). The catalysed reaction is L-aspartate(out) = L-aspartate(in). It carries out the reaction L-glutamate(out) = L-glutamate(in). The enzyme catalyses H(+)(in) = H(+)(out). It catalyses the reaction chloride(in) = chloride(out). Transports inorganic anions (sulfate, sulfite, thiosulfate and phosphate) and, to a lesser extent, a variety of dicarboxylates (e.g. malonate, malate and citramalate) and, even more so, aspartate and glutamate and tricarboxylates. May catalyze the export of sulfite and thiosulfate (the hydrogen sulfide degradation products) from the mitochondria, thereby modulating the level of the hydrogen sulfide. Also can mediate a very low unidirectional transport of anions including sulfate, phosphate, (S)-malate, citrate, L-aspartate and L-glutamate. Maintains oxidative balance (through uncoupling activities) and ATP production (by modifying mitochondrial membrane potential). Is able to transport protons across lipid membranes. Also exhibits transmembrane chloride transport activity to a lesser extent. May modify mitochondrial respiratory efficiency and mitochondrial oxidant production. The protein is Brain mitochondrial carrier protein 1 of Mus musculus (Mouse).